Here is a 150-residue protein sequence, read N- to C-terminus: Phosphopantetheine adenylyltransferase (150 aa).

Serine 10 lines the substrate pocket. Residues 10–11 (SF) and histidine 18 contribute to the ATP site. Substrate-binding residues include lysine 42, threonine 74, and arginine 88. ATP contacts are provided by residues 89-91 (GLR), glutamate 99, and 124-130 (LAYISSS).

It belongs to the bacterial CoaD family. Homohexamer. Requires Mg(2+) as cofactor.

Its subcellular location is the cytoplasm. The enzyme catalyses (R)-4'-phosphopantetheine + ATP + H(+) = 3'-dephospho-CoA + diphosphate. The protein operates within cofactor biosynthesis; coenzyme A biosynthesis; CoA from (R)-pantothenate: step 4/5. Its function is as follows. Reversibly transfers an adenylyl group from ATP to 4'-phosphopantetheine, yielding dephospho-CoA (dPCoA) and pyrophosphate. The sequence is that of Phosphopantetheine adenylyltransferase from Cytophaga hutchinsonii (strain ATCC 33406 / DSM 1761 / CIP 103989 / NBRC 15051 / NCIMB 9469 / D465).